A 244-amino-acid polypeptide reads, in one-letter code: N-(5'-phosphoribosyl)anthranilate isomerase 3, chloroplastic (244 aa).

The N-terminal 32 residues, 1-32, are a transit peptide targeting the chloroplast; sequence MSTGISSDLHLHPRALNFSKTSKSGLSNRKVS.

This sequence belongs to the TrpF family.

The protein localises to the plastid. Its subcellular location is the chloroplast. It carries out the reaction N-(5-phospho-beta-D-ribosyl)anthranilate = 1-(2-carboxyphenylamino)-1-deoxy-D-ribulose 5-phosphate. The protein operates within amino-acid biosynthesis; L-tryptophan biosynthesis; L-tryptophan from chorismate: step 3/5. This chain is N-(5'-phosphoribosyl)anthranilate isomerase 3, chloroplastic (PAI3), found in Arabidopsis thaliana (Mouse-ear cress).